The following is a 600-amino-acid chain: Glutamine--fructose-6-phosphate aminotransferase [isomerizing] (600 aa).

The active-site Nucleophile; for GATase activity is cysteine 2. Residues 2–217 (CGIVGYIGYQ…DGELVIVTSE (216 aa)) form the Glutamine amidotransferase type-2 domain. 2 SIS domains span residues 283 to 422 (IINE…AKGF) and 452 to 590 (IASD…VDKP). The active-site For Fru-6P isomerization activity is the lysine 595.

As to quaternary structure, homodimer.

The protein localises to the cytoplasm. The enzyme catalyses D-fructose 6-phosphate + L-glutamine = D-glucosamine 6-phosphate + L-glutamate. Catalyzes the first step in hexosamine metabolism, converting fructose-6P into glucosamine-6P using glutamine as a nitrogen source. The protein is Glutamine--fructose-6-phosphate aminotransferase [isomerizing] of Geobacillus kaustophilus (strain HTA426).